Here is a 511-residue protein sequence, read N- to C-terminus: Histidine ammonia-lyase (511 aa).

A cross-link (5-imidazolinone (Ala-Gly)) is located at residues 142 to 144 (ASG). 2,3-didehydroalanine (Ser) is present on serine 143.

Belongs to the PAL/histidase family. Contains an active site 4-methylidene-imidazol-5-one (MIO), which is formed autocatalytically by cyclization and dehydration of residues Ala-Ser-Gly.

It localises to the cytoplasm. It catalyses the reaction L-histidine = trans-urocanate + NH4(+). It functions in the pathway amino-acid degradation; L-histidine degradation into L-glutamate; N-formimidoyl-L-glutamate from L-histidine: step 1/3. The chain is Histidine ammonia-lyase from Brucella suis (strain ATCC 23445 / NCTC 10510).